Consider the following 113-residue polypeptide: Type III endosome membrane protein TEMP (113 aa).

The segment at 1 to 22 (MNETNKTLVGPSELPTASAVAP) is disordered. Topologically, residues 1–29 (MNETNKTLVGPSELPTASAVAPGPGTGAR) are extracellular. Residue Asn-5 is glycosylated (N-linked (GlcNAc...) asparagine). The helical; Signal-anchor for type III membrane protein transmembrane segment at 30-50 (AWPVLVGFVLGAVVLSLLIAL) threads the bilayer. At 51–113 (AAKCHLCRRY…TEGSRDHFSL (63 aa)) the chain is on the cytoplasmic side. The interval 66–113 (HRPLPETGRGGRPQVAEDEDDDGFIEDNYIQPGTGELGTEGSRDHFSL) is disordered. Positions 81–90 (AEDEDDDGFI) are enriched in acidic residues.

It localises to the membrane. Its subcellular location is the early endosome. The protein localises to the recycling endosome. It is found in the cell membrane. Functionally, may be involved in membrane trafficking between endosomes and plasma membrane. This Homo sapiens (Human) protein is Type III endosome membrane protein TEMP (C1orf210).